A 128-amino-acid polypeptide reads, in one-letter code: Small ribosomal subunit protein uS13 (128 aa).

A disordered region spans residues 98–128 (VRGQRTRTNARTRKGPRPRIGVKKKGKQAGS). Residues 101–128 (QRTRTNARTRKGPRPRIGVKKKGKQAGS) show a composition bias toward basic residues.

This sequence belongs to the universal ribosomal protein uS13 family. Part of the 30S ribosomal subunit. Forms a loose heterodimer with protein S19. Forms two bridges to the 50S subunit in the 70S ribosome.

Located at the top of the head of the 30S subunit, it contacts several helices of the 16S rRNA. In the 70S ribosome it contacts the 23S rRNA (bridge B1a) and protein L5 of the 50S subunit (bridge B1b), connecting the 2 subunits; these bridges are implicated in subunit movement. Contacts the tRNAs in the A and P-sites. This chain is Small ribosomal subunit protein uS13, found in Thermomicrobium roseum (strain ATCC 27502 / DSM 5159 / P-2).